The chain runs to 336 residues: Glycerol-3-phosphate dehydrogenase [NAD(P)+] (336 aa).

Ser11, Trp12, and Lys106 together coordinate NADPH. Sn-glycerol 3-phosphate-binding residues include Lys106, Gly134, and Ser136. Ala138 contributes to the NADPH binding site. Lys189, Asp242, Ser252, Arg253, and Asn254 together coordinate sn-glycerol 3-phosphate. Lys189 (proton acceptor) is an active-site residue. Arg253 serves as a coordination point for NADPH. NADPH-binding residues include Val277 and Glu279.

Belongs to the NAD-dependent glycerol-3-phosphate dehydrogenase family.

Its subcellular location is the cytoplasm. It carries out the reaction sn-glycerol 3-phosphate + NAD(+) = dihydroxyacetone phosphate + NADH + H(+). It catalyses the reaction sn-glycerol 3-phosphate + NADP(+) = dihydroxyacetone phosphate + NADPH + H(+). The protein operates within membrane lipid metabolism; glycerophospholipid metabolism. Functionally, catalyzes the reduction of the glycolytic intermediate dihydroxyacetone phosphate (DHAP) to sn-glycerol 3-phosphate (G3P), the key precursor for phospholipid synthesis. The sequence is that of Glycerol-3-phosphate dehydrogenase [NAD(P)+] from Agathobacter rectalis (strain ATCC 33656 / DSM 3377 / JCM 17463 / KCTC 5835 / VPI 0990) (Eubacterium rectale).